The following is a 131-amino-acid chain: Glycine cleavage system H protein (131 aa).

The region spanning 24–106 is the Lipoyl-binding domain; the sequence is TVRVGITDYA…YGEGWLVELQ (83 aa). The residue at position 65 (lysine 65) is an N6-lipoyllysine.

It belongs to the GcvH family. The glycine cleavage system is composed of four proteins: P, T, L and H. Requires (R)-lipoate as cofactor.

In terms of biological role, the glycine cleavage system catalyzes the degradation of glycine. The H protein shuttles the methylamine group of glycine from the P protein to the T protein. In Mycolicibacterium gilvum (strain PYR-GCK) (Mycobacterium gilvum (strain PYR-GCK)), this protein is Glycine cleavage system H protein.